Consider the following 94-residue polypeptide: Small ribosomal subunit protein uS19 (94 aa).

It belongs to the universal ribosomal protein uS19 family.

Functionally, protein S19 forms a complex with S13 that binds strongly to the 16S ribosomal RNA. The chain is Small ribosomal subunit protein uS19 from Dictyoglomus thermophilum (strain ATCC 35947 / DSM 3960 / H-6-12).